We begin with the raw amino-acid sequence, 314 residues long: Ribosomal RNA small subunit methyltransferase H (314 aa).

S-adenosyl-L-methionine contacts are provided by residues 37–39 (GSH), D57, F84, D105, and Q112.

Belongs to the methyltransferase superfamily. RsmH family.

It localises to the cytoplasm. The enzyme catalyses cytidine(1402) in 16S rRNA + S-adenosyl-L-methionine = N(4)-methylcytidine(1402) in 16S rRNA + S-adenosyl-L-homocysteine + H(+). Its function is as follows. Specifically methylates the N4 position of cytidine in position 1402 (C1402) of 16S rRNA. The polypeptide is Ribosomal RNA small subunit methyltransferase H (Fusobacterium nucleatum subsp. nucleatum (strain ATCC 25586 / DSM 15643 / BCRC 10681 / CIP 101130 / JCM 8532 / KCTC 2640 / LMG 13131 / VPI 4355)).